The sequence spans 386 residues: Succinate--CoA ligase [ADP-forming] subunit beta (386 aa).

The region spanning 9–244 (KAILRSYGVS…LDEEDPKEIE (236 aa)) is the ATP-grasp domain. Residues K46, 53–55 (GRG), E99, C102, and E107 each bind ATP. N199 and D213 together coordinate Mg(2+). Substrate is bound by residues N264 and 321 to 323 (GIM).

The protein belongs to the succinate/malate CoA ligase beta subunit family. In terms of assembly, heterotetramer of two alpha and two beta subunits. Mg(2+) serves as cofactor.

It carries out the reaction succinate + ATP + CoA = succinyl-CoA + ADP + phosphate. The enzyme catalyses GTP + succinate + CoA = succinyl-CoA + GDP + phosphate. It functions in the pathway carbohydrate metabolism; tricarboxylic acid cycle; succinate from succinyl-CoA (ligase route): step 1/1. Functionally, succinyl-CoA synthetase functions in the citric acid cycle (TCA), coupling the hydrolysis of succinyl-CoA to the synthesis of either ATP or GTP and thus represents the only step of substrate-level phosphorylation in the TCA. The beta subunit provides nucleotide specificity of the enzyme and binds the substrate succinate, while the binding sites for coenzyme A and phosphate are found in the alpha subunit. The protein is Succinate--CoA ligase [ADP-forming] subunit beta of Bacillus cytotoxicus (strain DSM 22905 / CIP 110041 / 391-98 / NVH 391-98).